A 290-amino-acid polypeptide reads, in one-letter code: MAHAECSLLSEADFVMTTDRSVFYISDGTAITAEVLGHAVLSQFPVNITSLTLPFVENVQRALAVKAQINALYQQSGVRPLVFFSIVTPEVRDIIVQSDGFCQDIVQALVAPLQQELGLSPAPVAHRTHGLDASNLGKYDARIAAIDYTLAHDDGISLRGLEDAQVILLGVSRCGKTPTSLYLAMQFGIRAANYPFIADDMDNLKLPPALRAHQNKLFGLTIDPERLAAIRQERAENTRYASMRQCRLEVGEVEALFRTHQIRYLNSTNYSVEEIATKILDIMGLTRRMY.

170–177 contributes to the ADP binding site; it reads GVSRCGKT.

The protein belongs to the pyruvate, phosphate/water dikinase regulatory protein family. PSRP subfamily.

The catalysed reaction is [pyruvate, water dikinase] + ADP = [pyruvate, water dikinase]-phosphate + AMP + H(+). It carries out the reaction [pyruvate, water dikinase]-phosphate + phosphate + H(+) = [pyruvate, water dikinase] + diphosphate. Functionally, bifunctional serine/threonine kinase and phosphorylase involved in the regulation of the phosphoenolpyruvate synthase (PEPS) by catalyzing its phosphorylation/dephosphorylation. The sequence is that of Putative phosphoenolpyruvate synthase regulatory protein (ydiA) from Enterobacter agglomerans (Erwinia herbicola).